We begin with the raw amino-acid sequence, 335 residues long: Putative hydrogenase expression/formation protein MJ0676 (335 aa).

It belongs to the HypE family.

The sequence is that of Putative hydrogenase expression/formation protein MJ0676 from Methanocaldococcus jannaschii (strain ATCC 43067 / DSM 2661 / JAL-1 / JCM 10045 / NBRC 100440) (Methanococcus jannaschii).